Here is a 313-residue protein sequence, read N- to C-terminus: MRMSAPELIRIVSRDSPMALAQVERVRAELAALHPGVRTEVVPVRTTGDKWLGDLSQVEGKGAFTKEVDAALLSGEADLAVHCVKDVPADRPLPAGTVFAAFLKRDDVRDALVHPDGLTLDELPDGTRVGTSSVRRVAQLAATHPHLRCVPFRGNANRRLAKLAAGEADALLLAVSGLERIGRTDVISEVLSTETMMPPIGAGILALQCREGDRALIEAVSALGDPRTHREATAERMFLHVLQGHCNSPIAGHAQVDRSGELSLRACVFTPDGKVRLNAHEWAGRLDPATLGTSVAVALLRQGAREIIDGIAH.

At C246 the chain carries S-(dipyrrolylmethanemethyl)cysteine.

This sequence belongs to the HMBS family. As to quaternary structure, monomer. Dipyrromethane serves as cofactor.

It carries out the reaction 4 porphobilinogen + H2O = hydroxymethylbilane + 4 NH4(+). The protein operates within porphyrin-containing compound metabolism; protoporphyrin-IX biosynthesis; coproporphyrinogen-III from 5-aminolevulinate: step 2/4. Functionally, tetrapolymerization of the monopyrrole PBG into the hydroxymethylbilane pre-uroporphyrinogen in several discrete steps. The sequence is that of Porphobilinogen deaminase 2 (hemC2) from Streptomyces coelicolor (strain ATCC BAA-471 / A3(2) / M145).